We begin with the raw amino-acid sequence, 70 residues long: Putative ankyrin repeat protein RC0502 (70 aa).

The ANK repeat unit spans residues 9–43 (KGRIPIHYATYSKQHEITQILILLQPGSEIDTVDN).

This Rickettsia conorii (strain ATCC VR-613 / Malish 7) protein is Putative ankyrin repeat protein RC0502.